The sequence spans 153 residues: Peptide methionine sulfoxide reductase MsrA (153 aa).

The active site involves Cys10.

Belongs to the MsrA Met sulfoxide reductase family.

It carries out the reaction L-methionyl-[protein] + [thioredoxin]-disulfide + H2O = L-methionyl-(S)-S-oxide-[protein] + [thioredoxin]-dithiol. The enzyme catalyses [thioredoxin]-disulfide + L-methionine + H2O = L-methionine (S)-S-oxide + [thioredoxin]-dithiol. Functionally, has an important function as a repair enzyme for proteins that have been inactivated by oxidation. Catalyzes the reversible oxidation-reduction of methionine sulfoxide in proteins to methionine. The protein is Peptide methionine sulfoxide reductase MsrA of Methanococcoides burtonii (strain DSM 6242 / NBRC 107633 / OCM 468 / ACE-M).